Here is a 241-residue protein sequence, read N- to C-terminus: Uridylate kinase (241 aa).

12-15 (KLSG) is an ATP binding site. The interval 20–25 (GDKGQG) is involved in allosteric activation by GTP. Glycine 54 contacts UMP. Positions 55 and 59 each coordinate ATP. Residues aspartate 74 and 135-142 (TGSPYFST) contribute to the UMP site. ATP-binding residues include asparagine 163, tyrosine 169, and aspartate 172.

It belongs to the UMP kinase family. Homohexamer.

It is found in the cytoplasm. The enzyme catalyses UMP + ATP = UDP + ADP. Its pathway is pyrimidine metabolism; CTP biosynthesis via de novo pathway; UDP from UMP (UMPK route): step 1/1. Its activity is regulated as follows. Allosterically activated by GTP. Inhibited by UTP. In terms of biological role, catalyzes the reversible phosphorylation of UMP to UDP. The chain is Uridylate kinase from Leuconostoc mesenteroides subsp. mesenteroides (strain ATCC 8293 / DSM 20343 / BCRC 11652 / CCM 1803 / JCM 6124 / NCDO 523 / NBRC 100496 / NCIMB 8023 / NCTC 12954 / NRRL B-1118 / 37Y).